The sequence spans 435 residues: MTEEVFIMSQERVKRPGHTRWYISSLLSGIIILNYFDRVAISVAAPAIQDSFHLTATELGIVFSIYTYSYTLMQLPVGSLLDRFGVAWVTRVGMTIWSFLTILLAFLQGKLLLYLFRFLIGLTSASAFPAASKATALWFPPSERGLANSLFDSAAKFSNVIGAPLVAFLVTTFDWRVAFLTIGCINVLFTIFFWQYYEQPERHKRISKSELNYIQKHNAITTEQIPYKTGPLLKKLFTNRKVWGLMIGFTGYGYTFNLLLTWLPTFFKHTYGMDLMSSGLFTAVPWLISTISGIAVGGWLVDYFIKKGYPNTKVYRTVIIVGMSFGFFFLGSILTNNITVAIICISIGLAGISATAPVGWSISAELAPIGSVSMLSSMVNLANNLFGGIIAASLTGYLFDVTGSFTLSFLVAGFVLLLGLVFYVFVLGDVKRIKL.

12 helical membrane-spanning segments follow: residues Leu-26–Pro-46, Ile-61–Leu-81, Ile-96–Phe-116, Leu-119–Phe-139, Leu-150–Val-170, Val-177–Tyr-197, Val-242–Trp-262, Phe-281–Val-301, Phe-325–Ile-345, Ile-347–Ala-367, Leu-385–Phe-405, and Leu-407–Leu-427.

This sequence belongs to the major facilitator superfamily. Phthalate permease family.

Its subcellular location is the cell membrane. This is an uncharacterized protein from Bacillus subtilis (strain 168).